A 347-amino-acid chain; its full sequence is Phosphoribosylformylglycinamidine cyclo-ligase (347 aa).

The protein belongs to the AIR synthase family.

It is found in the cytoplasm. The enzyme catalyses 2-formamido-N(1)-(5-O-phospho-beta-D-ribosyl)acetamidine + ATP = 5-amino-1-(5-phospho-beta-D-ribosyl)imidazole + ADP + phosphate + H(+). The protein operates within purine metabolism; IMP biosynthesis via de novo pathway; 5-amino-1-(5-phospho-D-ribosyl)imidazole from N(2)-formyl-N(1)-(5-phospho-D-ribosyl)glycinamide: step 2/2. The chain is Phosphoribosylformylglycinamidine cyclo-ligase from Alcanivorax borkumensis (strain ATCC 700651 / DSM 11573 / NCIMB 13689 / SK2).